Here is a 374-residue protein sequence, read N- to C-terminus: Chaperone protein DnaJ (374 aa).

The J domain occupies 5–70 (DYYDVLGVAK…DKRAAYDRFG (66 aa)). A CR-type zinc finger spans residues 131-209 (GCEEKIRIPT…CHGQGRVQEY (79 aa)). Cys144, Cys147, Cys161, Cys164, Cys183, Cys186, Cys197, and Cys200 together coordinate Zn(2+). CXXCXGXG motif repeat units follow at residues 144-151 (CKTCDGSG), 161-168 (CGTCGGAG), 183-190 (CPECHGAG), and 197-204 (CRDCHGQG).

It belongs to the DnaJ family. As to quaternary structure, homodimer. Requires Zn(2+) as cofactor.

The protein localises to the cytoplasm. Its function is as follows. Participates actively in the response to hyperosmotic and heat shock by preventing the aggregation of stress-denatured proteins and by disaggregating proteins, also in an autonomous, DnaK-independent fashion. Unfolded proteins bind initially to DnaJ; upon interaction with the DnaJ-bound protein, DnaK hydrolyzes its bound ATP, resulting in the formation of a stable complex. GrpE releases ADP from DnaK; ATP binding to DnaK triggers the release of the substrate protein, thus completing the reaction cycle. Several rounds of ATP-dependent interactions between DnaJ, DnaK and GrpE are required for fully efficient folding. Also involved, together with DnaK and GrpE, in the DNA replication of plasmids through activation of initiation proteins. The protein is Chaperone protein DnaJ of Marinomonas sp. (strain MWYL1).